A 140-amino-acid chain; its full sequence is Phosphatidylinositol N-acetylglucosaminyltransferase subunit GPI19 (140 aa).

Over 1–12 the chain is Cytoplasmic; the sequence is MYTKEYYWFSQY. The helical transmembrane segment at 13-33 threads the bilayer; sequence MIITSTLVLTIIWSILPSSLG. Residues 34–52 are Lumenal-facing; the sequence is EAAPKQFINTLLDIFPQRR. The chain crosses the membrane as a helical span at residues 53 to 73; that stretch reads WIITLESIMLMGMLCTYIGLL. The Cytoplasmic portion of the chain corresponds to 74–140; it reads MYNEDTLTPP…YLYDNDHTST (67 aa).

Belongs to the GPI19 family. As to quaternary structure, component of the phosphatidylinositol N-acetylglucosaminyltransferase (GPI-GlcNAc transferase) complex composed of at least GPI1, GPI2, GPI3, GPI15, GPI19 and ERI1. Interacts with GPI2.

It is found in the endoplasmic reticulum membrane. The catalysed reaction is a 1,2-diacyl-sn-glycero-3-phospho-(1D-myo-inositol) + UDP-N-acetyl-alpha-D-glucosamine = a 6-(N-acetyl-alpha-D-glucosaminyl)-1-(1,2-diacyl-sn-glycero-3-phospho)-1D-myo-inositol + UDP + H(+). The protein operates within glycolipid biosynthesis; glycosylphosphatidylinositol-anchor biosynthesis. Its function is as follows. Part of the complex catalyzing the transfer of N-acetylglucosamine from UDP-N-acetylglucosamine to phosphatidylinositol, the first step of GPI biosynthesis. Involved in cell wall biosynthesis. This Saccharomyces cerevisiae (strain ATCC 204508 / S288c) (Baker's yeast) protein is Phosphatidylinositol N-acetylglucosaminyltransferase subunit GPI19 (GPI19).